A 456-amino-acid chain; its full sequence is MTOR-associated protein MEAK7 (456 aa).

Gly2 carries N-myristoyl glycine lipidation. The 169-residue stretch at 244–412 (SILDVLSVMY…FDKMEVWAVG (169 aa)) folds into the TLDc domain.

Interacts (via C-terminal domain) with MTOR and MLST8; the interaction with MTOR increases upon nutrient stimulation.

It is found in the membrane. Its subcellular location is the cytoplasm. The protein resides in the lysosome. Its function is as follows. Activates an alternative mTOR signaling through RPS6KB2 activation and EIF4EBP1 repression to regulate cell proliferation and migration. Recruits MTOR at the lysosome, essential for MTOR signaling at the lysosome. The sequence is that of MTOR-associated protein MEAK7 from Homo sapiens (Human).